A 777-amino-acid chain; its full sequence is DNA ligase (777 aa).

Residues 35–39 (DAEYD), 84–85 (SL), and E116 each bind NAD(+). Catalysis depends on K118, which acts as the N6-AMP-lysine intermediate. 4 residues coordinate NAD(+): R139, E176, K293, and K317. Positions 411, 414, 429, and 435 each coordinate Zn(2+). A BRCT domain is found at 691-777 (MESQPLEGQT…NQHGIDPGAL (87 aa)).

It belongs to the NAD-dependent DNA ligase family. LigA subfamily. Mg(2+) is required as a cofactor. The cofactor is Mn(2+).

The catalysed reaction is NAD(+) + (deoxyribonucleotide)n-3'-hydroxyl + 5'-phospho-(deoxyribonucleotide)m = (deoxyribonucleotide)n+m + AMP + beta-nicotinamide D-nucleotide.. DNA ligase that catalyzes the formation of phosphodiester linkages between 5'-phosphoryl and 3'-hydroxyl groups in double-stranded DNA using NAD as a coenzyme and as the energy source for the reaction. It is essential for DNA replication and repair of damaged DNA. This chain is DNA ligase, found in Alcanivorax borkumensis (strain ATCC 700651 / DSM 11573 / NCIMB 13689 / SK2).